Consider the following 211-residue polypeptide: tRNA (guanine-N(7)-)-methyltransferase (211 aa).

S-adenosyl-L-methionine-binding residues include glutamate 44, aspartate 69, aspartate 96, and aspartate 118. The active site involves aspartate 118. Position 122 (lysine 122) interacts with substrate. The tract at residues 124–129 is interaction with RNA; sequence KHEKRR. Residues aspartate 154 and 191-194 contribute to the substrate site; that span reads TEYE.

It belongs to the class I-like SAM-binding methyltransferase superfamily. TrmB family.

The enzyme catalyses guanosine(46) in tRNA + S-adenosyl-L-methionine = N(7)-methylguanosine(46) in tRNA + S-adenosyl-L-homocysteine. It participates in tRNA modification; N(7)-methylguanine-tRNA biosynthesis. In terms of biological role, catalyzes the formation of N(7)-methylguanine at position 46 (m7G46) in tRNA. In Streptococcus pyogenes serotype M18 (strain MGAS8232), this protein is tRNA (guanine-N(7)-)-methyltransferase.